A 153-amino-acid polypeptide reads, in one-letter code: UPF0756 membrane protein LCABL_15860 (153 aa).

4 consecutive transmembrane segments (helical) span residues 4-24 (WLFL…SLII), 52-72 (WGVT…EIGF), 85-105 (WIAI…VGLL), and 115-135 (LVFG…GPVI).

It belongs to the UPF0756 family.

The protein resides in the cell membrane. This is UPF0756 membrane protein LCABL_15860 from Lacticaseibacillus casei (strain BL23) (Lactobacillus casei).